The primary structure comprises 373 residues: Transcription factor SPATULA (373 aa).

Positions 1-21 (MISQREEREEKKQRVMGDKKL) are enriched in basic and acidic residues. Disordered regions lie at residues 1 to 46 (MISQ…PSSS) and 141 to 210 (VQGN…KRRR). Positions 141 to 160 (VQGNSSGTRVSSSSVGASGN) are enriched in low complexity. Acidic residues predominate over residues 161 to 177 (ETDEYDCESEEGGEAVV). Over residues 182 to 191 (SSKSGPSSRS) the composition is skewed to low complexity. Over residues 197–210 (RAAEVHNLSEKRRR) the composition is skewed to basic and acidic residues. Positions 197 to 246 (RAAEVHNLSEKRRRSRINEKMKALQSLIPNSNKTDKASMLDEAIEYLKQL) constitute a bHLH domain.

In terms of assembly, homodimer. Interacts with HEC1, HEC2 and HEC3. Binds to RGL2 and RGA. In terms of tissue distribution, expressed in lateral root caps, young leaves, stipules, maturing pith cells of the stem, differentiating vascular cells, shoot apical meristems and flowers.

Its subcellular location is the nucleus. In terms of biological role, transcription factor that plays a role in floral organogenesis. Promotes the growth of carpel margins and of pollen tract tissues derived from them. This Arabidopsis thaliana (Mouse-ear cress) protein is Transcription factor SPATULA (SPT).